The sequence spans 170 residues: MILDVVIEDARWDAAALEKQAQEAVSATLAYLELEDEDWEVTVLGCDDARIADLNAEFREKPKPTNVLSWPAQELAAAQDGGQPTPPEVDFMGDAALGDIAISYDTCVKEANLAHKSREDHVRHLLVHGTLHLLGYDHIRDGDATIMETLEVGILGKLGIPDPYIIEDGP.

Residues His128, His132, and His138 each coordinate Zn(2+).

Belongs to the endoribonuclease YbeY family. Zn(2+) serves as cofactor.

The protein resides in the cytoplasm. In terms of biological role, single strand-specific metallo-endoribonuclease involved in late-stage 70S ribosome quality control and in maturation of the 3' terminus of the 16S rRNA. This chain is Endoribonuclease YbeY, found in Ruegeria sp. (strain TM1040) (Silicibacter sp.).